The chain runs to 181 residues: Adenylyl-sulfate kinase (181 aa).

12 to 19 serves as a coordination point for ATP; sequence GLSGAGKT. The Phosphoserine intermediate role is filled by Ser86.

Belongs to the APS kinase family.

The enzyme catalyses adenosine 5'-phosphosulfate + ATP = 3'-phosphoadenylyl sulfate + ADP + H(+). Its pathway is sulfur metabolism; hydrogen sulfide biosynthesis; sulfite from sulfate: step 2/3. Functionally, catalyzes the synthesis of activated sulfate. The polypeptide is Adenylyl-sulfate kinase (Rippkaea orientalis (strain PCC 8801 / RF-1) (Cyanothece sp. (strain PCC 8801))).